The sequence spans 396 residues: ATP phosphoribosyltransferase regulatory subunit (396 aa).

It belongs to the class-II aminoacyl-tRNA synthetase family. HisZ subfamily. As to quaternary structure, heteromultimer composed of HisG and HisZ subunits.

The protein localises to the cytoplasm. The protein operates within amino-acid biosynthesis; L-histidine biosynthesis; L-histidine from 5-phospho-alpha-D-ribose 1-diphosphate: step 1/9. In terms of biological role, required for the first step of histidine biosynthesis. May allow the feedback regulation of ATP phosphoribosyltransferase activity by histidine. The sequence is that of ATP phosphoribosyltransferase regulatory subunit from Cellvibrio japonicus (strain Ueda107) (Pseudomonas fluorescens subsp. cellulosa).